The following is a 494-amino-acid chain: Ketol-acid reductoisomerase (NADP(+)) (494 aa).

The KARI N-terminal Rossmann domain occupies 14-208 (LDQIGRCRFM…GGDRAGVLES (195 aa)). NADP(+)-binding positions include 45–48 (CGAQ), Arg-68, Arg-76, Ser-78, and 108–110 (DKQ). His-132 is an active-site residue. Gly-158 lines the NADP(+) pocket. 2 consecutive KARI C-terminal knotted domains span residues 209–344 (SFVA…NAPE) and 345–487 (YNGK…MTDM). The Mg(2+) site is built by Asp-217, Glu-221, Glu-389, and Glu-393. Ser-414 serves as a coordination point for substrate.

This sequence belongs to the ketol-acid reductoisomerase family. Requires Mg(2+) as cofactor.

It catalyses the reaction (2R)-2,3-dihydroxy-3-methylbutanoate + NADP(+) = (2S)-2-acetolactate + NADPH + H(+). The enzyme catalyses (2R,3R)-2,3-dihydroxy-3-methylpentanoate + NADP(+) = (S)-2-ethyl-2-hydroxy-3-oxobutanoate + NADPH + H(+). Its pathway is amino-acid biosynthesis; L-isoleucine biosynthesis; L-isoleucine from 2-oxobutanoate: step 2/4. It participates in amino-acid biosynthesis; L-valine biosynthesis; L-valine from pyruvate: step 2/4. Involved in the biosynthesis of branched-chain amino acids (BCAA). Catalyzes an alkyl-migration followed by a ketol-acid reduction of (S)-2-acetolactate (S2AL) to yield (R)-2,3-dihydroxy-isovalerate. In the isomerase reaction, S2AL is rearranged via a Mg-dependent methyl migration to produce 3-hydroxy-3-methyl-2-ketobutyrate (HMKB). In the reductase reaction, this 2-ketoacid undergoes a metal-dependent reduction by NADPH to yield (R)-2,3-dihydroxy-isovalerate. The polypeptide is Ketol-acid reductoisomerase (NADP(+)) (Pseudoalteromonas atlantica (strain T6c / ATCC BAA-1087)).